The following is a 291-amino-acid chain: ATP synthase gamma chain (291 aa).

This sequence belongs to the ATPase gamma chain family. In terms of assembly, F-type ATPases have 2 components, CF(1) - the catalytic core - and CF(0) - the membrane proton channel. CF(1) has five subunits: alpha(3), beta(3), gamma(1), delta(1), epsilon(1). CF(0) has three main subunits: a, b and c.

The protein localises to the cell inner membrane. Its function is as follows. Produces ATP from ADP in the presence of a proton gradient across the membrane. The gamma chain is believed to be important in regulating ATPase activity and the flow of protons through the CF(0) complex. The sequence is that of ATP synthase gamma chain from Burkholderia thailandensis (strain ATCC 700388 / DSM 13276 / CCUG 48851 / CIP 106301 / E264).